The primary structure comprises 342 residues: Ketol-acid reductoisomerase (NADP(+)) (342 aa).

The region spanning 2-182 is the KARI N-terminal Rossmann domain; it reads AKIYYDDDAD…GGLRAGGIET (181 aa). NADP(+) contacts are provided by residues 25–28, Arg-48, Ser-51, Ser-53, and 83–86; these read YGSQ and DQNQ. His-108 is an active-site residue. Gly-134 contacts NADP(+). The 146-residue stretch at 183 to 328 folds into the KARI C-terminal knotted domain; sequence SFREETETDL…KELRKMYSWL (146 aa). Mg(2+) contacts are provided by Asp-191, Glu-195, Glu-227, and Glu-231. A substrate-binding site is contributed by Ser-252.

Belongs to the ketol-acid reductoisomerase family. Mg(2+) serves as cofactor.

It carries out the reaction (2R)-2,3-dihydroxy-3-methylbutanoate + NADP(+) = (2S)-2-acetolactate + NADPH + H(+). The catalysed reaction is (2R,3R)-2,3-dihydroxy-3-methylpentanoate + NADP(+) = (S)-2-ethyl-2-hydroxy-3-oxobutanoate + NADPH + H(+). It functions in the pathway amino-acid biosynthesis; L-isoleucine biosynthesis; L-isoleucine from 2-oxobutanoate: step 2/4. The protein operates within amino-acid biosynthesis; L-valine biosynthesis; L-valine from pyruvate: step 2/4. Involved in the biosynthesis of branched-chain amino acids (BCAA). Catalyzes an alkyl-migration followed by a ketol-acid reduction of (S)-2-acetolactate (S2AL) to yield (R)-2,3-dihydroxy-isovalerate. In the isomerase reaction, S2AL is rearranged via a Mg-dependent methyl migration to produce 3-hydroxy-3-methyl-2-ketobutyrate (HMKB). In the reductase reaction, this 2-ketoacid undergoes a metal-dependent reduction by NADPH to yield (R)-2,3-dihydroxy-isovalerate. The chain is Ketol-acid reductoisomerase (NADP(+)) from Cutibacterium acnes (strain DSM 16379 / KPA171202) (Propionibacterium acnes).